A 71-amino-acid chain; its full sequence is UPF0346 protein SP70585_0986 (71 aa).

It belongs to the UPF0346 family.

This Streptococcus pneumoniae (strain 70585) protein is UPF0346 protein SP70585_0986.